Here is a 568-residue protein sequence, read N- to C-terminus: Small ribosomal subunit protein bS1 (568 aa).

S1 motif domains are found at residues 27 to 93 (GYVA…LSRE), 111 to 177 (GERV…VSRR), 198 to 266 (GQVV…LGMK), 283 to 353 (GKKI…LGLK), 370 to 440 (GTEV…LGIK), and 459 to 530 (NAVV…LSIK).

This sequence belongs to the bacterial ribosomal protein bS1 family.

Binds mRNA; thus facilitating recognition of the initiation point. It is needed to translate mRNA with a short Shine-Dalgarno (SD) purine-rich sequence. The protein is Small ribosomal subunit protein bS1 (rpsA) of Rhizobium meliloti (strain 1021) (Ensifer meliloti).